Reading from the N-terminus, the 51-residue chain is Large ribosomal subunit protein eL39 (51 aa).

It belongs to the eukaryotic ribosomal protein eL39 family.

The polypeptide is Large ribosomal subunit protein eL39 (rpl39e) (Pyrobaculum aerophilum (strain ATCC 51768 / DSM 7523 / JCM 9630 / CIP 104966 / NBRC 100827 / IM2)).